The primary structure comprises 456 residues: GPI-anchored protein 13 (456 aa).

The N-terminal stretch at 1–23 (MRSPSLAVAATTVLGLFSSSALA) is a signal peptide. A glycan (N-linked (GlcNAc...) asparagine) is linked at asparagine 27. Glycine 433 carries the GPI-anchor amidated glycine lipid modification. A propeptide spans 434–456 (AAAVNVVPTTAFGLFAIILASIF) (removed in mature form).

The GPI-anchor is attached to the protein in the endoplasmic reticulum and serves to target the protein to the cell surface. There, the glucosamine-inositol phospholipid moiety is cleaved off and the GPI-modified mannoprotein is covalently attached via its lipidless GPI glycan remnant to the 1,6-beta-glucan of the outer cell wall layer.

It is found in the secreted. Its subcellular location is the cell wall. It localises to the membrane. Cell wall protein which contributes to cell wall synthesis and is important for acquiring normal surface properties. Required for virulence in a mouse infection model. This is GPI-anchored protein 13 (PGA13) from Candida albicans (strain SC5314 / ATCC MYA-2876) (Yeast).